Consider the following 245-residue polypeptide: DNA polymerase sliding clamp 1 (245 aa).

Belongs to the PCNA family. In terms of assembly, the subunits circularize to form a toroid; DNA passes through its center. Replication factor C (RFC) is required to load the toroid on the DNA. Forms a dimeric complex with PCNA3 and a trimeric complex with PCNA2 and PCNA3; does not form homotrimers.

Sliding clamp subunit that acts as a moving platform for DNA processing. Responsible for tethering the catalytic subunit of DNA polymerase and other proteins to DNA during high-speed replication. The trimeric complex inhibits DNA ligase and both 3'-5' and 5'-3' activity of Hel308 (Hjm) helicase, but stimulates Hjc, the Holliday junction cleavage enzyme. The chain is DNA polymerase sliding clamp 1 from Sulfurisphaera tokodaii (strain DSM 16993 / JCM 10545 / NBRC 100140 / 7) (Sulfolobus tokodaii).